Consider the following 79-residue polypeptide: D-alanyl carrier protein (79 aa).

A Carrier domain is found at 1 to 76 (MEEQVLSLLE…RVMAYVKKRV (76 aa)). An O-(pantetheine 4'-phosphoryl)serine modification is found at Ser-34.

It belongs to the DltC family. Post-translationally, 4'-phosphopantetheine is transferred from CoA to a specific serine of apo-DCP.

It is found in the cytoplasm. Its pathway is cell wall biogenesis; lipoteichoic acid biosynthesis. Functionally, carrier protein involved in the D-alanylation of lipoteichoic acid (LTA). The loading of thioester-linked D-alanine onto DltC is catalyzed by D-alanine--D-alanyl carrier protein ligase DltA. The DltC-carried D-alanyl group is further transferred to cell membrane phosphatidylglycerol (PG) by forming an ester bond, probably catalyzed by DltD. D-alanylation of LTA plays an important role in modulating the properties of the cell wall in Gram-positive bacteria, influencing the net charge of the cell wall. In Abiotrophia defectiva (Streptococcus defectivus), this protein is D-alanyl carrier protein.